A 379-amino-acid polypeptide reads, in one-letter code: tRNA-specific 2-thiouridylase MnmA (379 aa).

ATP is bound by residues 9–16 and Met-35; that span reads GLSGGVDS. Residues 95-97 are interaction with target base in tRNA; sequence NPD. Cys-100 acts as the Nucleophile in catalysis. Residues Cys-100 and Cys-198 are joined by a disulfide bond. Position 124 (Gly-124) interacts with ATP. Positions 148–150 are interaction with tRNA; that stretch reads KDQ. Cys-198 (cysteine persulfide intermediate) is an active-site residue. Residues 325–326 form an interaction with tRNA region; it reads RY.

The protein belongs to the MnmA/TRMU family.

The protein resides in the cytoplasm. It carries out the reaction S-sulfanyl-L-cysteinyl-[protein] + uridine(34) in tRNA + AH2 + ATP = 2-thiouridine(34) in tRNA + L-cysteinyl-[protein] + A + AMP + diphosphate + H(+). Functionally, catalyzes the 2-thiolation of uridine at the wobble position (U34) of tRNA, leading to the formation of s(2)U34. The chain is tRNA-specific 2-thiouridylase MnmA from Acidovorax sp. (strain JS42).